Here is a 94-residue protein sequence, read N- to C-terminus: Acylphosphatase (94 aa).

The 90-residue stretch at 5 to 94 folds into the Acylphosphatase-like domain; the sequence is RLTAFVHGHV…PRDVEGFVER (90 aa). Active-site residues include Arg20 and Asn38.

Belongs to the acylphosphatase family.

It catalyses the reaction an acyl phosphate + H2O = a carboxylate + phosphate + H(+). The chain is Acylphosphatase (acyP) from Corynebacterium glutamicum (strain ATCC 13032 / DSM 20300 / JCM 1318 / BCRC 11384 / CCUG 27702 / LMG 3730 / NBRC 12168 / NCIMB 10025 / NRRL B-2784 / 534).